We begin with the raw amino-acid sequence, 166 residues long: Urease accessory protein UreE 2 (166 aa).

The interval 133–156 (QPEHGAYGGGHHHSRAGEEDFNYP) is disordered.

Belongs to the UreE family.

Its subcellular location is the cytoplasm. Functionally, involved in urease metallocenter assembly. Binds nickel. Probably functions as a nickel donor during metallocenter assembly. The sequence is that of Urease accessory protein UreE 2 from Pseudomonas syringae pv. tomato (strain ATCC BAA-871 / DC3000).